A 283-amino-acid chain; its full sequence is Acetyl-coenzyme A carboxylase carboxyl transferase subunit beta (283 aa).

The CoA carboxyltransferase N-terminal domain maps to 23-283 (LWIKCPSCSE…DFLMAGKAAA (261 aa)). The Zn(2+) site is built by Cys27, Cys30, Cys46, and Cys49. The C4-type zinc-finger motif lies at 27–49 (CPSCSEMLFTKEYEDNLSVCPHC).

It belongs to the AccD/PCCB family. In terms of assembly, acetyl-CoA carboxylase is a heterohexamer composed of biotin carboxyl carrier protein (AccB), biotin carboxylase (AccC) and two subunits each of ACCase subunit alpha (AccA) and ACCase subunit beta (AccD). It depends on Zn(2+) as a cofactor.

Its subcellular location is the cytoplasm. It carries out the reaction N(6)-carboxybiotinyl-L-lysyl-[protein] + acetyl-CoA = N(6)-biotinyl-L-lysyl-[protein] + malonyl-CoA. The protein operates within lipid metabolism; malonyl-CoA biosynthesis; malonyl-CoA from acetyl-CoA: step 1/1. Functionally, component of the acetyl coenzyme A carboxylase (ACC) complex. Biotin carboxylase (BC) catalyzes the carboxylation of biotin on its carrier protein (BCCP) and then the CO(2) group is transferred by the transcarboxylase to acetyl-CoA to form malonyl-CoA. This is Acetyl-coenzyme A carboxylase carboxyl transferase subunit beta from Novosphingobium aromaticivorans (strain ATCC 700278 / DSM 12444 / CCUG 56034 / CIP 105152 / NBRC 16084 / F199).